Consider the following 463-residue polypeptide: Altered inheritance of mitochondria protein 23, mitochondrial (463 aa).

The N-terminal 69 residues, 1-69 (MKLHTRTLLA…TRFGNNNERY (69 aa)), are a transit peptide targeting the mitochondrion. 3 disordered regions span residues 25–124 (LNRP…NQKL), 208–229 (IHSS…GAST), and 391–449 (KKPT…KKLT). The segment covering 48–79 (QPRTGSNLSPRQTRFGNNNERYGSASGKQLGQ) has biased composition (polar residues). Residues 94-114 (NHNNNSNNNNNGGYPSSNVNS) show a composition bias toward low complexity. The segment covering 213–224 (RKADSKTEDGAD) has biased composition (basic and acidic residues). Polar residues predominate over residues 391–405 (KKPTTGGTNSTSTIK). Composition is skewed to basic and acidic residues over residues 406-423 (QTDK…KEKL) and 440-449 (PPAKEKKKLT).

The protein belongs to the AIM23 family.

The protein resides in the mitochondrion. This is Altered inheritance of mitochondria protein 23, mitochondrial (AIM23) from Lodderomyces elongisporus (strain ATCC 11503 / CBS 2605 / JCM 1781 / NBRC 1676 / NRRL YB-4239) (Yeast).